The sequence spans 192 residues: Xanthine phosphoribosyltransferase (192 aa).

Xanthine is bound by residues L20 and N27. Position 128–132 (128–132) interacts with 5-phospho-alpha-D-ribose 1-diphosphate; that stretch reads ANGDA. K156 serves as a coordination point for xanthine.

This sequence belongs to the purine/pyrimidine phosphoribosyltransferase family. Xpt subfamily. Homodimer.

It is found in the cytoplasm. The enzyme catalyses XMP + diphosphate = xanthine + 5-phospho-alpha-D-ribose 1-diphosphate. It participates in purine metabolism; XMP biosynthesis via salvage pathway; XMP from xanthine: step 1/1. Its function is as follows. Converts the preformed base xanthine, a product of nucleic acid breakdown, to xanthosine 5'-monophosphate (XMP), so it can be reused for RNA or DNA synthesis. In Staphylococcus aureus (strain MRSA252), this protein is Xanthine phosphoribosyltransferase.